The primary structure comprises 454 residues: tRNA modification GTPase MnmE (454 aa).

(6S)-5-formyl-5,6,7,8-tetrahydrofolate contacts are provided by arginine 23, glutamate 80, and lysine 120. The TrmE-type G domain maps to 216-377 (GMKVVIAGRP…LRNHLKQSMG (162 aa)). K(+) is bound at residue asparagine 226. GTP contacts are provided by residues 226-231 (NAGKSS), 245-251 (TDIAGTT), 270-273 (DTAG), 335-338 (NKAD), and 358-360 (SAR). Serine 230 lines the Mg(2+) pocket. Threonine 245, isoleucine 247, and threonine 250 together coordinate K(+). Threonine 251 is a Mg(2+) binding site. Lysine 454 contributes to the (6S)-5-formyl-5,6,7,8-tetrahydrofolate binding site.

The protein belongs to the TRAFAC class TrmE-Era-EngA-EngB-Septin-like GTPase superfamily. TrmE GTPase family. In terms of assembly, homodimer. Heterotetramer of two MnmE and two MnmG subunits. K(+) serves as cofactor.

It localises to the cytoplasm. Exhibits a very high intrinsic GTPase hydrolysis rate. Involved in the addition of a carboxymethylaminomethyl (cmnm) group at the wobble position (U34) of certain tRNAs, forming tRNA-cmnm(5)s(2)U34. The protein is tRNA modification GTPase MnmE of Escherichia coli O7:K1 (strain IAI39 / ExPEC).